Reading from the N-terminus, the 376-residue chain is N6-methyladenosine RNA methyltransferase MTA1 (376 aa).

The interval 53 to 78 (TRRLISSPPPETPFVTPEPKNGPSPL) is disordered.

It belongs to the MT-A70-like family.

The enzyme catalyses an adenosine in mRNA + S-adenosyl-L-methionine = an N(6)-methyladenosine in mRNA + S-adenosyl-L-homocysteine + H(+). Its function is as follows. N6-methyladenosine RNA methyltransferase that plays a crucial role in fungal phenotypic traits, virulence, and stress tolerance. Mediates the methylation of mRNAs to produce N6-methyladenosine (m6A)-containing mRNAs. M6A is a modification present at internal sites of mRNAs and some non-coding RNAs and plays a role in mRNA stability and processing. Required for appressorium turgor pressure and regulates autophagosome formation during appressorium formation stage. Specifically, mediates the stability of ATG8 mRNA in a m6A-dependent manner via modification of the m6A site A982 located in 3'UTR region. In Pyricularia oryzae (strain 70-15 / ATCC MYA-4617 / FGSC 8958) (Rice blast fungus), this protein is N6-methyladenosine RNA methyltransferase MTA1.